The primary structure comprises 925 residues: Nonribosomal peptide synthetase apvA (925 aa).

Residues 15–436 are adenylation (A) domain; it reads AREDSGHVVV…TGRAKENMII (422 aa). Positions 564-644 constitute a Carrier domain; the sequence is EPQNDLEKTL…DLATALEKLQ (81 aa). Ser-601 carries the O-(pantetheine 4'-phosphoryl)serine modification. Positions 663-909 are thioesterase (TE) domain; the sequence is PLWLVHPGAG…HYSMIGPDHV (247 aa).

It belongs to the NRP synthetase family. As to expression, apvA specifically produces aspulvinone E in hyphea, in contrast to melA which produces aspulvinone E in conidia where it is converted to UV-protective Asp-melanin.

The catalysed reaction is 2 3-(4-hydroxyphenyl)pyruvate + AH2 + 2 ATP + O2 = aspulvinone E + A + 2 AMP + CO2 + 2 diphosphate + H2O + H(+). Its pathway is secondary metabolite biosynthesis. Nonribosomal peptide synthetase; part of the gene cluster that mediates the biosynthesis of aspulvinones. The nonribosomal peptide synthetase apvA is responsible for the production of aspulvinone E, the core structure of aspulvinones. ApvA first activates 4-hydroxyphenylpyruvate (HPPA) through its A domain to AMP-HPPA. The HPPA unit is then loaded to the T domain and eventually transferred to the TE domain. Upon loading of another HPPA unit to the T domain, the TE domain promotes the enolate formation on the unit attached. The next step involves head to tail Claisen condensation, followed by the keto-enol tautermerization and a nucleophilic attack on the carbonyl carbon to yield the furanone partial structure. A spontaneous oxidation at the beta-carbon of the thioester might occur in aerobic condition. The TE domain then catalyzes the hydrolysis of the thioester, followed by spontaneous decarboxylation, dehydroxylation and keto-enol tautermerization to give the aspulvinone core. Aspulvinone E is highly unstable and converted to isoaspulvinone E in the presence of light. The structural diversity of the aspulvinones suggests that other tailoring enzymes are involved and have still to be identified. The sequence is that of Nonribosomal peptide synthetase apvA from Aspergillus terreus (strain NIH 2624 / FGSC A1156).